The sequence spans 235 residues: MESLETKESKVFTPVYFTSRQILLPLKMISYVSRFLKFEDFRKFIRAMWPNGEANVIFQELLERLSIRKFKAKFYNREEIEVEYKFDRERSGINWILINFKDLLPILGGIMLPDDEDKFQSIFTLEDFLKRNLKVHRCSGGIHTSCHNLGRDSDSDSEAKLDICPFDHYHHFCPDHVIAWFKHYLLTAILLREGVYDELVKNANLPNADHLTSGRRRTEQYWLRVARRKKCRFSQ.

Positions 57–235 (IFQELLERLS…ARRKKCRFSQ (179 aa)) are repeat element.

This chain is Repeat element protein, found in Campoletis sonorensis (CsIV).